A 431-amino-acid chain; its full sequence is Enolase (431 aa).

Gln166 contributes to the (2R)-2-phosphoglycerate binding site. Glu208 serves as the catalytic Proton donor. Mg(2+) is bound by residues Asp245, Glu288, and Asp315. Positions 340, 369, 370, and 391 each coordinate (2R)-2-phosphoglycerate. Lys340 acts as the Proton acceptor in catalysis.

It belongs to the enolase family. Requires Mg(2+) as cofactor.

It is found in the cytoplasm. The protein localises to the secreted. Its subcellular location is the cell surface. It catalyses the reaction (2R)-2-phosphoglycerate = phosphoenolpyruvate + H2O. It functions in the pathway carbohydrate degradation; glycolysis; pyruvate from D-glyceraldehyde 3-phosphate: step 4/5. Functionally, catalyzes the reversible conversion of 2-phosphoglycerate (2-PG) into phosphoenolpyruvate (PEP). It is essential for the degradation of carbohydrates via glycolysis. This is Enolase from Clostridium botulinum (strain Kyoto / Type A2).